The sequence spans 729 residues: Translation initiation factor IF-2 (729 aa).

Residues 20 to 141 (QFAGGGRGPG…TTTVRAPVRP (122 aa)) form a disordered region. The segment covering 22–91 (AGGGRGPGNP…PGGGRGGGRG (70 aa)) has biased composition (gly residues). A compositionally biased stretch (basic and acidic residues) spans 92–108 (GDGRRRDESFVENEGGR). The segment covering 112 to 127 (SGRTTSTATTARTPGG) has biased composition (low complexity). Positions 229 to 396 (PRPPVVTIMG…IILLVADLNE (168 aa)) constitute a tr-type G domain. The interval 238–245 (GHVDHGKT) is G1. A GTP-binding site is contributed by 238–245 (GHVDHGKT). Residues 263 to 267 (GITQH) form a G2 region. Positions 284–287 (DTPG) are G3. GTP contacts are provided by residues 284–288 (DTPGH) and 338–341 (NKID). Residues 338–341 (NKID) are G4. The tract at residues 374–376 (SAK) is G5.

Belongs to the TRAFAC class translation factor GTPase superfamily. Classic translation factor GTPase family. IF-2 subfamily.

It localises to the cytoplasm. Functionally, one of the essential components for the initiation of protein synthesis. Protects formylmethionyl-tRNA from spontaneous hydrolysis and promotes its binding to the 30S ribosomal subunits. Also involved in the hydrolysis of GTP during the formation of the 70S ribosomal complex. This is Translation initiation factor IF-2 from Roseiflexus sp. (strain RS-1).